A 439-amino-acid polypeptide reads, in one-letter code: Lipid-A-disaccharide synthase (439 aa).

The tract at residues 1–35 (MKEIGNRESGIVDGQRNGASVGSDPTALPIPHSPL) is disordered.

Belongs to the LpxB family.

The catalysed reaction is a lipid X + a UDP-2-N,3-O-bis[(3R)-3-hydroxyacyl]-alpha-D-glucosamine = a lipid A disaccharide + UDP + H(+). Its pathway is bacterial outer membrane biogenesis; LPS lipid A biosynthesis. In terms of biological role, condensation of UDP-2,3-diacylglucosamine and 2,3-diacylglucosamine-1-phosphate to form lipid A disaccharide, a precursor of lipid A, a phosphorylated glycolipid that anchors the lipopolysaccharide to the outer membrane of the cell. This chain is Lipid-A-disaccharide synthase, found in Xanthomonas euvesicatoria pv. vesicatoria (strain 85-10) (Xanthomonas campestris pv. vesicatoria).